We begin with the raw amino-acid sequence, 189 residues long: GMP synthase [glutamine-hydrolyzing] subunit A (189 aa).

The region spanning 1 to 189 is the Glutamine amidotransferase type-1 domain; the sequence is MIVILNNGGQ…CKKCGFEFEE (189 aa). Cys-76 serves as the catalytic Nucleophile. Residues His-163 and Glu-165 contribute to the active site.

Heterodimer composed of a glutamine amidotransferase subunit (A) and a GMP-binding subunit (B).

The catalysed reaction is XMP + L-glutamine + ATP + H2O = GMP + L-glutamate + AMP + diphosphate + 2 H(+). It participates in purine metabolism; GMP biosynthesis; GMP from XMP (L-Gln route): step 1/1. Its function is as follows. Catalyzes the synthesis of GMP from XMP. The chain is GMP synthase [glutamine-hydrolyzing] subunit A from Methanococcus maripaludis (strain C6 / ATCC BAA-1332).